The chain runs to 165 residues: E3 ubiquitin-protein ligase RNF181 (165 aa).

The RING-type; atypical zinc-finger motif lies at 88-129 (CPVCLLEFEEEETVIEMPCHHLFHSNCILPWLSKTNSCPLCR). The disordered stretch occupies residues 136-165 (DDSYEEHKKDKARRQQQQHRLENLHGAMYT). T165 is modified (phosphothreonine).

The protein belongs to the RNF181 family. As to quaternary structure, directly interacts with ITGA2B and, as a result, with integrin ITGA2B/ITGB3. There is no evidence that integrin ITGA2B/ITGB3 is an endogenous substrate for RNF181-directed ubiquitination. Post-translationally, auto-ubiquitinated as part of the enzymatic reaction.

It carries out the reaction S-ubiquitinyl-[E2 ubiquitin-conjugating enzyme]-L-cysteine + [acceptor protein]-L-lysine = [E2 ubiquitin-conjugating enzyme]-L-cysteine + N(6)-ubiquitinyl-[acceptor protein]-L-lysine.. The protein operates within protein modification; protein ubiquitination. Functionally, E3 ubiquitin-protein ligase which accepts ubiquitin from an E2 ubiquitin-conjugating enzyme in the form of a thioester and then directly transfers the ubiquitin to targeted substrates. Catalyzes monoubiquitination of 26S proteasome subunit PSMC2/RPT1. This Rattus norvegicus (Rat) protein is E3 ubiquitin-protein ligase RNF181 (Rnf181).